The primary structure comprises 310 residues: Pantothenate kinase (310 aa).

An ATP-binding site is contributed by 95 to 102 (GSVAVGKS).

It belongs to the prokaryotic pantothenate kinase family.

Its subcellular location is the cytoplasm. It catalyses the reaction (R)-pantothenate + ATP = (R)-4'-phosphopantothenate + ADP + H(+). The protein operates within cofactor biosynthesis; coenzyme A biosynthesis; CoA from (R)-pantothenate: step 1/5. The protein is Pantothenate kinase of Rhodococcus jostii (strain RHA1).